Consider the following 360-residue polypeptide: 3-isopropylmalate dehydrogenase (360 aa).

76-89 (GPKWDKLDMAIRPE) contributes to the NAD(+) binding site. The substrate site is built by arginine 96, arginine 106, arginine 134, and aspartate 224. The Mg(2+) site is built by aspartate 224, aspartate 248, and aspartate 252. An NAD(+)-binding site is contributed by 282–294 (GSAPDIAGQNMAN).

Belongs to the isocitrate and isopropylmalate dehydrogenases family. LeuB type 1 subfamily. Homodimer. Mg(2+) is required as a cofactor. Mn(2+) serves as cofactor.

It localises to the cytoplasm. The catalysed reaction is (2R,3S)-3-isopropylmalate + NAD(+) = 4-methyl-2-oxopentanoate + CO2 + NADH. It participates in amino-acid biosynthesis; L-leucine biosynthesis; L-leucine from 3-methyl-2-oxobutanoate: step 3/4. Functionally, catalyzes the oxidation of 3-carboxy-2-hydroxy-4-methylpentanoate (3-isopropylmalate) to 3-carboxy-4-methyl-2-oxopentanoate. The product decarboxylates to 4-methyl-2 oxopentanoate. The chain is 3-isopropylmalate dehydrogenase from Hahella chejuensis (strain KCTC 2396).